Consider the following 883-residue polypeptide: Copper-transporting ATPase PAA2, chloroplastic (883 aa).

The transit peptide at 1–65 (MASNLLRFPL…TQSFESTESS (65 aa)) directs the protein to the chloroplast. The HMA domain maps to 76 to 146 (TPILLDVSGM…RLTESGFEAK (71 aa)). Residues C87 and C90 each contribute to the Cu cation site. Transmembrane regions (helical) follow at residues 179–199 (VAFA…HILH), 209–229 (GIWD…GALL), 250–270 (MNSL…ISLV), 274–294 (LEWD…VLLG), 445–465 (AIAG…FAFW), and 499–519 (VLVV…ILIG). The 4-aspartylphosphate intermediate role is filled by D548. Residue 761-768 (GDGINDAP) participates in ATP binding. Residues D762 and D766 each contribute to the Mg(2+) site. The next 2 membrane-spanning stretches (helical) occupy residues 822 to 842 (LAWA…VLLP) and 846 to 866 (FAMT…FVVS).

This sequence belongs to the cation transport ATPase (P-type) (TC 3.A.3) family. Type IB subfamily. In terms of tissue distribution, expressed in the shoots only and not in the roots.

It is found in the plastid. Its subcellular location is the chloroplast thylakoid membrane. The enzyme catalyses Cu(2+)(in) + ATP + H2O = Cu(2+)(out) + ADP + phosphate + H(+). In terms of biological role, mediates copper transfer across the chloroplast thylakoid membrane. Required for copper delivery into the thylakoids lumen, which is essential for the function of copper proteins. The polypeptide is Copper-transporting ATPase PAA2, chloroplastic (PAA2) (Arabidopsis thaliana (Mouse-ear cress)).